We begin with the raw amino-acid sequence, 952 residues long: GATA zinc finger domain-containing protein 5 (952 aa).

Disordered regions lie at residues 1 to 36 and 138 to 197; these read MDYQ…DSPS and PTPL…SPKQ. Residues 10 to 24 show a composition bias toward polar residues; the sequence is QISQEFPTDISTTKS. A compositionally biased stretch (pro residues) spans 148-157; that stretch reads SPPPPPPPPA. Residues 158 to 196 are compositionally biased toward low complexity; the sequence is ATTTTTITTTTTTSAGNSTTKNNNNNNNNNNNNNGKSPK. The GATA-type zinc finger occupies 241–266; sequence CYQCNTSNTPEWRKGPEGPATLCNAC. 4 disordered regions span residues 380 to 418, 433 to 478, 634 to 699, and 732 to 816; these read MTPS…HEQP, LLSS…GGGG, QNNS…NKNN, and QQQE…LSVN. A compositionally biased stretch (basic residues) spans 393 to 412; sequence KTTKTKPKPKSKSKPGKITH. A compositionally biased stretch (low complexity) spans 445 to 467; the sequence is SSSSSCGTSLNSSLGSSSGTITN. Positions 468 to 478 are enriched in gly residues; the sequence is SGGGSSGGGGG. A compositionally biased stretch (polar residues) spans 634 to 653; sequence QNNSFSGPNDQNPYVPSVSL. Composition is skewed to low complexity over residues 654 to 668, 678 to 699, and 732 to 745; these read NSNK…NNNK, NNKN…NKNN, and QQQE…EQQQ. A compositionally biased stretch (polar residues) spans 746–762; it reads NLSINNSNQTNENEILG. The span at 763-814 shows a compositional bias: low complexity; that stretch reads TTTTTTTSTATIITSQVPMNLSPNSDDNQSSSNYSTLSDSGSSPTDSFSGLS.

The sequence is that of GATA zinc finger domain-containing protein 5 (gtaE) from Dictyostelium discoideum (Social amoeba).